A 477-amino-acid chain; its full sequence is Methylenetetrahydrofolate--tRNA-(uracil-5-)-methyltransferase TrmFO (477 aa).

15–20 serves as a coordination point for FAD; that stretch reads GAGLAG.

Belongs to the MnmG family. TrmFO subfamily. FAD is required as a cofactor.

The protein localises to the cytoplasm. The enzyme catalyses uridine(54) in tRNA + (6R)-5,10-methylene-5,6,7,8-tetrahydrofolate + NADH + H(+) = 5-methyluridine(54) in tRNA + (6S)-5,6,7,8-tetrahydrofolate + NAD(+). It carries out the reaction uridine(54) in tRNA + (6R)-5,10-methylene-5,6,7,8-tetrahydrofolate + NADPH + H(+) = 5-methyluridine(54) in tRNA + (6S)-5,6,7,8-tetrahydrofolate + NADP(+). Catalyzes the folate-dependent formation of 5-methyl-uridine at position 54 (M-5-U54) in all tRNAs. The sequence is that of Methylenetetrahydrofolate--tRNA-(uracil-5-)-methyltransferase TrmFO from Nitrobacter hamburgensis (strain DSM 10229 / NCIMB 13809 / X14).